The primary structure comprises 95 residues: Putative pterin-4-alpha-carbinolamine dehydratase (95 aa).

Belongs to the pterin-4-alpha-carbinolamine dehydratase family.

The enzyme catalyses (4aS,6R)-4a-hydroxy-L-erythro-5,6,7,8-tetrahydrobiopterin = (6R)-L-erythro-6,7-dihydrobiopterin + H2O. The sequence is that of Putative pterin-4-alpha-carbinolamine dehydratase from Nocardia farcinica (strain IFM 10152).